We begin with the raw amino-acid sequence, 109 residues long: UPF0122 protein ABC2295 (109 aa).

The protein belongs to the UPF0122 family.

In terms of biological role, might take part in the signal recognition particle (SRP) pathway. This is inferred from the conservation of its genetic proximity to ftsY/ffh. May be a regulatory protein. This is UPF0122 protein ABC2295 from Shouchella clausii (strain KSM-K16) (Alkalihalobacillus clausii).